The sequence spans 308 residues: Methionyl-tRNA formyltransferase (308 aa).

(6S)-5,6,7,8-tetrahydrofolate is bound at residue 110–113 (SLLP).

The protein belongs to the Fmt family.

It carries out the reaction L-methionyl-tRNA(fMet) + (6R)-10-formyltetrahydrofolate = N-formyl-L-methionyl-tRNA(fMet) + (6S)-5,6,7,8-tetrahydrofolate + H(+). Functionally, attaches a formyl group to the free amino group of methionyl-tRNA(fMet). The formyl group appears to play a dual role in the initiator identity of N-formylmethionyl-tRNA by promoting its recognition by IF2 and preventing the misappropriation of this tRNA by the elongation apparatus. In Neisseria meningitidis serogroup B (strain ATCC BAA-335 / MC58), this protein is Methionyl-tRNA formyltransferase.